The following is a 378-amino-acid chain: REST corepressor 3 (378 aa).

In terms of domain architecture, ELM2 spans 1 to 83 (MRVGAEYQAR…KSLADLPNFT (83 aa)). Positions 84-135 (PFPDEWTVEDKVLFEQAFSFHGKSFHRIQQMLPDKTIASLVKYYYSWKKTRS) constitute an SANT domain. The segment at 147–219 (LANRNNQGDS…SQRSKCRPPK (73 aa)) is disordered. A compositionally biased stretch (basic and acidic residues) spans 162–184 (EPHPMDGNDSDYDPKKEAKKEGN). The segment covering 205-217 (QHRHHSQRSKCRP) has biased composition (basic residues). A coiled-coil region spans residues 238–273 (ANTILRRLDMELISLKRQVQNAKQVNSALKQKMEGG). The disordered stretch occupies residues 337 to 356 (TASSTSCCSCSPPSASAAPT).

Belongs to the CoREST family.

It localises to the nucleus. Its function is as follows. May act as a component of a corepressor complex that represses transcription. The chain is REST corepressor 3 (RCOR3) from Gallus gallus (Chicken).